We begin with the raw amino-acid sequence, 766 residues long: MVSSSSYDVSAALKQEGLKSSDWDEICRRLGREPNRAELGMFGVMWSEHCCYRNSRPLLSGFPTEGPRILVGPGENAGVVDLGDGHRLAFKIESHNHPSAVEPFQGAATGVGGILRDIFTMGARPIALLNALRFGPLDDSANVGLMEGVVAGIAHYGNCVGVPTVGGEVAFDPSYSGNPLVNAMALGLMETKDIVKSGAIGVGNPVVYVGSTTGRDGMGGASFASAELSADSLDDRPAVQVGDPFLEKGLIEACLEAFDSGDVVAAQDMGAAGLTCSCSEMAAKGGLGVELDLDRVPARESGMTAYEFLLSESQERMLFVVKAGREEPLMKRFRRWGLQAAVVGQVLEEPIVRVLHHGEVAAEVPATALADDTPIEKHALLSEPPVDLQEHWQWTEAQLPDLADPAAALLGLLDDPTIASKRWVHRQYDQQVLANTVVSSGAADAAVIRLRPQQGDGSLKTTTRGVAATVDCPNRWVALDPERGAMAAVAEAARNLSCVGSEPLAITDNLNFPSPETPKGFWQLAMACRGISEACKAFQTPVTGGNVSLYNETRRDDGSLQPIHPTPVIGMVGVVDDITKVTGLGWCQPGDVVVLLGVKPDADQDDRVGLAGSSYQQFTLGTITGRPPRIDFDLEKRVQGLVRQAIADGLIASAHDSSDGGLAVALAECSIASGFGVELTLSVGTMSPARLLFAEGGARVVVSVKADQLTRWQTMLTSNPDVSTTVLGTVASHGRFQLSFGVGSTIDLSVDQLQQVYADALPRRLA.

His49 is an active-site residue. Positions 52 and 91 each coordinate ATP. Position 93 (Glu93) interacts with Mg(2+). Substrate-binding positions include 94-97 (SHNH) and Arg116. His95 acts as the Proton acceptor in catalysis. A Mg(2+)-binding site is contributed by Asp117. Gln240 lines the substrate pocket. Residue Asp268 coordinates Mg(2+). 312–314 (ESQ) contributes to the substrate binding site. Residues Asp508 and Gly545 each contribute to the ATP site. Asn546 is a Mg(2+) binding site. A substrate-binding site is contributed by Ser548.

This sequence belongs to the FGAMS family. In terms of assembly, monomer. Part of the FGAM synthase complex composed of 1 PurL, 1 PurQ and 2 PurS subunits.

The protein resides in the cytoplasm. The enzyme catalyses N(2)-formyl-N(1)-(5-phospho-beta-D-ribosyl)glycinamide + L-glutamine + ATP + H2O = 2-formamido-N(1)-(5-O-phospho-beta-D-ribosyl)acetamidine + L-glutamate + ADP + phosphate + H(+). The protein operates within purine metabolism; IMP biosynthesis via de novo pathway; 5-amino-1-(5-phospho-D-ribosyl)imidazole from N(2)-formyl-N(1)-(5-phospho-D-ribosyl)glycinamide: step 1/2. Functionally, part of the phosphoribosylformylglycinamidine synthase complex involved in the purines biosynthetic pathway. Catalyzes the ATP-dependent conversion of formylglycinamide ribonucleotide (FGAR) and glutamine to yield formylglycinamidine ribonucleotide (FGAM) and glutamate. The FGAM synthase complex is composed of three subunits. PurQ produces an ammonia molecule by converting glutamine to glutamate. PurL transfers the ammonia molecule to FGAR to form FGAM in an ATP-dependent manner. PurS interacts with PurQ and PurL and is thought to assist in the transfer of the ammonia molecule from PurQ to PurL. The sequence is that of Phosphoribosylformylglycinamidine synthase subunit PurL from Synechococcus sp. (strain CC9902).